A 144-amino-acid polypeptide reads, in one-letter code: MKTYVAKPAEVDRKWYVIDASDKTLGRLSSEVASILRGKHKPIFTPHVDTGDFVIVINAAKIKLTGDKLNQKKFRHHTGYPGGLREMDYRTLLQKRPEKAIEAAVQGMLPHNRLGRSMIKKLKVYSGSEHPHQAQKPELRELKG.

Belongs to the universal ribosomal protein uL13 family. In terms of assembly, part of the 50S ribosomal subunit.

Functionally, this protein is one of the early assembly proteins of the 50S ribosomal subunit, although it is not seen to bind rRNA by itself. It is important during the early stages of 50S assembly. The sequence is that of Large ribosomal subunit protein uL13 from Syntrophomonas wolfei subsp. wolfei (strain DSM 2245B / Goettingen).